Reading from the N-terminus, the 222-residue chain is uncharacterized protein (222 aa).

2 helical membrane passes run 22–42 and 189–209; these read IRVILFIMAICMAMVLLFLYI and AICLALGFFLSIVISVMFCLV.

Its subcellular location is the cell membrane. This is an uncharacterized protein from Escherichia coli (strain K12).